Consider the following 1219-residue polypeptide: Protein jagged-1 (1219 aa).

The N-terminal stretch at 1-33 (MRSPRTRGRPGRPLSLLLALLCALRAKVCGASG) is a signal peptide. The Extracellular segment spans residues 34 to 1067 (QFELEILSMQ…QRRPLKNRTD (1034 aa)). An N-linked (GlcNAc...) asparagine glycan is attached at Asn-143. The 45-residue stretch at 185 to 229 (VTCDDHYYGFGCNKFCRPRDDFFGHYACDQNGNKTCMEGWMGPEC) folds into the DSL domain. Disulfide bonds link Cys-187-Cys-196 and Cys-200-Cys-212. Residues 199 to 207 (FCRPRDDFF) are important for interaction with NOTCH1. The N-linked (GlcNAc...) asparagine glycan is linked to Asn-217. Disulfide bonds link Cys-220–Cys-229, Cys-234–Cys-245, Cys-238–Cys-251, Cys-253–Cys-262, Cys-265–Cys-276, Cys-271–Cys-282, Cys-284–Cys-293, Cys-300–Cys-312, Cys-306–Cys-322, Cys-324–Cys-333, Cys-340–Cys-351, Cys-345–Cys-360, Cys-362–Cys-371, Cys-378–Cys-389, Cys-383–Cys-398, Cys-400–Cys-409, Cys-416–Cys-427, Cys-421–Cys-436, Cys-438–Cys-447, Cys-454–Cys-464, Cys-458–Cys-473, Cys-475–Cys-484, Cys-491–Cys-502, Cys-496–Cys-511, Cys-513–Cys-522, Cys-529–Cys-540, Cys-534–Cys-549, Cys-551–Cys-560, Cys-578–Cys-605, Cys-599–Cys-615, Cys-617–Cys-626, Cys-633–Cys-644, Cys-638–Cys-653, Cys-655–Cys-664, Cys-671–Cys-682, Cys-676–Cys-691, Cys-693–Cys-702, Cys-709–Cys-720, Cys-714–Cys-729, and Cys-731–Cys-740. The region spanning 230–263 (NKAICRQGCSPKHGSCKLPGDCRCQYGWQGLYCD) is the EGF-like 1 domain. In terms of domain architecture, EGF-like 2; atypical spans 264-294 (KCIPHPGCVHGTCNEPWQCLCETNWGGQLCD). 2 consecutive EGF-like domains span residues 296 to 334 (DLNYCGTHQPCLNRGTCSNTGPDKYQCSCPEGYSGPNCE) and 336 to 372 (AEHACLSDPCHNRGSCKETSSGFECECSPGWTGPTCS). Residues 374–410 (NIDDCSPNNCSHGGTCQDLVNGFKCVCPPQWTGKTCQ) enclose the EGF-like 5; calcium-binding domain. An N-linked (GlcNAc...) asparagine glycan is attached at Asn-382. Positions 412–448 (DANECEAKPCVNARSCKNLIASYYCDCLPGWMGQNCD) constitute an EGF-like 6; calcium-binding domain. Residues 450 to 485 (NINDCLGQCQNDASCRDLVNGYRCICPPGYAGDHCE) form the EGF-like 7; calcium-binding domain. An EGF-like 8; calcium-binding domain is found at 487 to 523 (DIDECASNPCLNGGHCQNEINRFQCLCPTGFSGNLCQ). 2 consecutive EGF-like domains span residues 525–561 (DIDYCEPNPCQNGAQCYNRASDYFCKCPEDYEGKNCS) and 586–627 (DTPE…TYCH). Asn-559 carries an N-linked (GlcNAc...) asparagine glycan. In terms of domain architecture, EGF-like 11; calcium-binding spans 629-665 (NINDCEGNPCTNGGTCIDGVNSYKCICSDGWEGAHCE). Residues 667–703 (NINDCSQNPCHYGGTCRDLVNDFYCDCKNGWKGKTCH) enclose the EGF-like 12; calcium-binding domain. EGF-like domains lie at 705–741 (RDSQCDEATCNNGGTCYDEVDTFKCMCPGGWEGTTCN) and 744–780 (RNSSCLPNPCHNGGTCVVNGDSFTCVCKEGWEGPICT). N-linked (GlcNAc...) asparagine glycosylation occurs at Asn-745. 11 disulfides stabilise this stretch: Cys-748-Cys-759, Cys-753-Cys-768, Cys-770-Cys-779, Cys-786-Cys-797, Cys-791-Cys-806, Cys-808-Cys-817, Cys-824-Cys-835, Cys-829-Cys-844, Cys-846-Cys-855, Cys-925-Cys-936, and Cys-948-Cys-958. Positions 782–818 (NTNDCSPHPCYNSGTCVDGDNWYRCECAPGFAGPDCR) constitute an EGF-like 15; calcium-binding domain. The 37-residue stretch at 820-856 (NINECQSSPCAFGATCVDEINGYQCICPPGHSGAKCH) folds into the EGF-like 16; calcium-binding domain. N-linked (GlcNAc...) asparagine glycans are attached at residues Asn-960, Asn-991, Asn-1045, and Asn-1064. The helical transmembrane segment at 1068 to 1093 (FLVPLLSSVLTVAWVCCLVTAFYWCV) threads the bilayer. Topologically, residues 1094 to 1219 (RKRRRKPSSH…QSLNRMEYIV (126 aa)) are cytoplasmic. The interval 1182-1219 (REEKVPQRTPTKHPNWTNKQDNRDLESAQSLNRMEYIV) is disordered. Residues 1189 to 1200 (RTPTKHPNWTNK) show a composition bias toward polar residues.

Interacts with NOTCH1. Interacts with NOTCH2 and NOTCH3. As to expression, widely expressed in a variety of tissues.

Its subcellular location is the membrane. The protein resides in the cell membrane. Functionally, ligand for multiple Notch receptors and involved in the mediation of Notch signaling. May be involved in cell-fate decisions during hematopoiesis. Enhances fibroblast growth factor-induced angiogenesis (in vitro). Seems to be involved in early and late stages of mammalian cardiovascular development. Inhibits myoblast differentiation. May regulate fibroblast growth factor-induced angiogenesis. In Rattus norvegicus (Rat), this protein is Protein jagged-1 (Jag1).